A 260-amino-acid chain; its full sequence is 3-alpha-(or 20-beta)-hydroxysteroid dehydrogenase (260 aa).

Arginine 17, methionine 19, aspartate 38, aspartate 61, valine 62, asparagine 88, tyrosine 153, lysine 157, valine 186, threonine 188, and threonine 191 together coordinate NAD(+). Catalysis depends on tyrosine 153, which acts as the Proton acceptor.

Belongs to the short-chain dehydrogenases/reductases (SDR) family. In terms of assembly, homotetramer.

The enzyme catalyses androstan-3alpha,17beta-diol + NAD(+) = 17beta-hydroxyandrostanone + NADH + H(+). Its pathway is lipid metabolism; steroid degradation. Its function is as follows. Probably involved in steroid metabolism. The chain is 3-alpha-(or 20-beta)-hydroxysteroid dehydrogenase (fabG3) from Mycobacterium bovis (strain ATCC BAA-935 / AF2122/97).